A 400-amino-acid polypeptide reads, in one-letter code: S-adenosylmethionine synthase (400 aa).

H17 serves as a coordination point for ATP. D19 contacts Mg(2+). Residue E45 participates in K(+) binding. L-methionine-binding residues include E58 and Q101. Residues 101–111 (QSPDIAMGVDQ) are flexible loop. Residues 177-179 (DGK), 244-245 (RF), D253, 259-260 (RK), A276, and K280 each bind ATP. D253 is a binding site for L-methionine. Position 284 (K284) interacts with L-methionine.

This sequence belongs to the AdoMet synthase family. As to quaternary structure, homotetramer; dimer of dimers. It depends on Mg(2+) as a cofactor. K(+) serves as cofactor.

Its subcellular location is the cytoplasm. It carries out the reaction L-methionine + ATP + H2O = S-adenosyl-L-methionine + phosphate + diphosphate. It participates in amino-acid biosynthesis; S-adenosyl-L-methionine biosynthesis; S-adenosyl-L-methionine from L-methionine: step 1/1. In terms of biological role, catalyzes the formation of S-adenosylmethionine (AdoMet) from methionine and ATP. The overall synthetic reaction is composed of two sequential steps, AdoMet formation and the subsequent tripolyphosphate hydrolysis which occurs prior to release of AdoMet from the enzyme. The protein is S-adenosylmethionine synthase of Bacillus licheniformis (strain ATCC 14580 / DSM 13 / JCM 2505 / CCUG 7422 / NBRC 12200 / NCIMB 9375 / NCTC 10341 / NRRL NRS-1264 / Gibson 46).